Reading from the N-terminus, the 525-residue chain is Alcohol O-acetyltransferase 1 (525 aa).

The membrane association stretch occupies residues 24 to 41; it reads GHARRMGSVEDLYVALNR. Active-site charge relay system residues include H191 and D195. Positions 508-525 are membrane association; that stretch reads QESLEELCSIYKALLLGP.

Belongs to the ATF1 alcohol acetyltransferase family.

Its subcellular location is the lipid droplet. The protein resides in the endoplasmic reticulum membrane. The enzyme catalyses an aliphatic alcohol + acetyl-CoA = an acetyl ester + CoA. The catalysed reaction is a fatty acyl-CoA + H2O = a fatty acid + CoA + H(+). It carries out the reaction 3-methylbutanol + acetyl-CoA = 3-methylbutyl acetate + CoA. Its activity is regulated as follows. Found to be inhibited by cadmium, copper, zinc and mercurium divalent cations and sulfhydryl reagents. Inhibited by the addition of unsaturated fatty acids to the culture. Major alcohol O-acetyltransferase that uses acetyl-CoA to synthesize acetate esters from various alcohols, producing ethyl acetate, isoamyl acetate, isobutyl acetate, butyl acetate, hexyl acetate, heptyl acetate and octyl acetate. The alcohol acyltransferase activity is promiscuous with regard to alcohol but relatively specific for acetyl-CoA since ATF1 does not use any other acyl-CoAs (C3, C4, C5, C6, C8, C10, C12). Acts also as an efficient thioesterase in vitro with specificity towards medium-chain-length acyl-CoAs. In natural environments, the production of aromatic volatile metabolites promotes dispersal through insect vectors. This is Alcohol O-acetyltransferase 1 from Saccharomyces cerevisiae (strain ATCC 204508 / S288c) (Baker's yeast).